A 410-amino-acid polypeptide reads, in one-letter code: Zinc transporter ttm-1 (410 aa).

2 stretches are compositionally biased toward low complexity: residues 1-13 (MTISMISPSSIRL) and 35-46 (SVSSSDSGVSAD). The tract at residues 1–94 (MTISMISPSS…GAHKHSHDEK (94 aa)) is disordered. At 1–103 (MTISMISPSS…KYQKGRRAEK (103 aa)) the chain is on the cytoplasmic side. The span at 50–69 (HHHHGHGHGHSHGGHGHSHT) shows a compositional bias: basic residues. Residues 104-124 (VLWAVAALSAVFIAAEFVGGF) form a helical membrane-spanning segment. The Extracellular portion of the chain corresponds to 125–129 (WAQSL). The helical transmembrane segment at 130-150 (AIMTDAGHMLSDLLSFIISIF) threads the bilayer. Residues 151–171 (AIRCARLPASKRLSFGYERAE) are Cytoplasmic-facing. The chain crosses the membrane as a helical span at residues 172 to 192 (VLGALTSVIILWVLTTVLVVV). Residues 193–208 (AIQRIVNNEHEVDADV) are Extracellular-facing. The helical transmembrane segment at 209–229 (MLITAGVGVLFNIVMGLVLHF) threads the bilayer. At 230-258 (GTGGHGHTHGGHSSHGHAHDGKNVNVRAA) the chain is on the cytoplasmic side. A helical transmembrane segment spans residues 259–279 (LIHVIGDLVQSIGVLIAALII). Arg280 is a topological domain (extracellular). The chain crosses the membrane as a helical span at residues 281–301 (FTGWTLADPICTFLFSIIVLF). At 302–410 (TTVTVMRDIF…CDTCQQQETA (109 aa)) the chain is on the cytoplasmic side.

It belongs to the cation diffusion facilitator (CDF) transporter (TC 2.A.4) family. SLC30A subfamily. Isoform a: Expressed in the hypodermis and the intestine. Isoform b: Expressed in the intestine, head neurons, seam cells, hypodermis, and the vulva.

It localises to the cytoplasmic vesicle membrane. Its subcellular location is the apical cell membrane. Functionally, promotes excretion of zinc from intestinal cells into the intestinal lumen in response to increased dietary zinc. Involved in cadmium resistance, possibly by promoting its transport from cells. Involved in resistance to B.thuringiensis pore-forming toxin Cry5B downstream of the sek-1 and pmk-1 MAPK kinase pathway. In Caenorhabditis elegans, this protein is Zinc transporter ttm-1.